Here is a 538-residue protein sequence, read N- to C-terminus: NAD(P)H-quinone oxidoreductase chain 4 (538 aa).

A run of 14 helical transmembrane segments spans residues 11–31, 43–63, 95–115, 119–139, 143–163, 175–195, 217–237, 251–271, 285–305, 314–334, 340–360, 382–404, 425–445, and 472–492; these read FPWLSLSIFFPIVGALIVPFI, YALIIALITFLITVAAYFKGF, MPLILLTSFITSLAVLAAWPV, PKLFFFLILAMDGGQIAVFAV, LLFFLAWELELFPVYLFLAIW, FIIYTAGSSLFILLAGLAMGF, GFQLLCYSGLLIAFGVKLPIV, TAPVHMLLAGILLKMGGYALL, FAPLLIVLGVVNIIYAALTSF, IAYSSISHMGFVLIGIGSFSS, AMLQMVSHGLIGASLFFLVGA, IMFALWTACAFASLALPGMSGFI, IVVASLAAIGVILTPIYLLSM, and IYIIACLLVPIIGIGLYPKIM.

Belongs to the complex I subunit 4 family.

It localises to the cellular thylakoid membrane. The enzyme catalyses a plastoquinone + NADH + (n+1) H(+)(in) = a plastoquinol + NAD(+) + n H(+)(out). The catalysed reaction is a plastoquinone + NADPH + (n+1) H(+)(in) = a plastoquinol + NADP(+) + n H(+)(out). Its function is as follows. NDH-1 shuttles electrons from NAD(P)H, via FMN and iron-sulfur (Fe-S) centers, to quinones in the respiratory chain. The immediate electron acceptor for the enzyme in this species is believed to be plastoquinone. Couples the redox reaction to proton translocation (for every two electrons transferred, four hydrogen ions are translocated across the cytoplasmic membrane), and thus conserves the redox energy in a proton gradient. The chain is NAD(P)H-quinone oxidoreductase chain 4 from Prochlorococcus marinus (strain NATL2A).